A 269-amino-acid chain; its full sequence is Regulatory protein RecX (269 aa).

The protein belongs to the RecX family.

Its subcellular location is the cytoplasm. Modulates RecA activity. The sequence is that of Regulatory protein RecX from Lactococcus lactis subsp. cremoris (strain SK11).